We begin with the raw amino-acid sequence, 150 residues long: Endoribonuclease YbeY (150 aa).

Residues histidine 112, histidine 116, and histidine 122 each coordinate Zn(2+).

Belongs to the endoribonuclease YbeY family. Zn(2+) serves as cofactor.

The protein localises to the cytoplasm. Functionally, single strand-specific metallo-endoribonuclease involved in late-stage 70S ribosome quality control and in maturation of the 3' terminus of the 16S rRNA. In Geobacter metallireducens (strain ATCC 53774 / DSM 7210 / GS-15), this protein is Endoribonuclease YbeY.